The sequence spans 299 residues: Craniofacial development protein 1 (299 aa).

2 stretches are compositionally biased toward acidic residues: residues 1 to 18 (MEEFDSEDFSTSEEDEDY) and 25 to 43 (YSEDDVNELVKEDEVDGEE). 2 disordered regions span residues 1–156 (MEEF…ELEK) and 192–224 (FFKQNEKEKPQANVPSALPSLPAGSGLKRSSGM). The span at 49-65 (QGKKRKAQSIPARKRRQ) shows a compositional bias: basic residues. A compositionally biased stretch (acidic residues) spans 70 to 94 (LEEEEEEDANSESEGSSSEEEDDAA). Residues S82, S85, and S86 each carry the phosphoserine modification. Basic and acidic residues predominate over residues 95 to 112 (EQEKGIGSEDARKKKEDE). S116 carries the phosphoserine modification. A Glycyl lysine isopeptide (Lys-Gly) (interchain with G-Cter in SUMO2) cross-link involves residue K150. A hydrophilic region spans residues 178 to 217 (VTKEVDATSKEAKSFFKQNEKEKPQANVPSALPSLPAGSG). The span at 192-201 (FFKQNEKEKP) shows a compositional bias: basic and acidic residues. S216 carries the post-translational modification Phosphoserine. A BCNT-C domain is found at 218-299 (LKRSSGMSSL…RDLRLSKMKP (82 aa)). K219 carries the post-translational modification N6-methyllysine. S250 carries the post-translational modification Phosphoserine.

Phosphorylated by CK2 (casein kinase II) in vitro. In terms of tissue distribution, ubiquitous.

It is found in the chromosome. It localises to the centromere. The protein localises to the kinetochore. In terms of biological role, may play a role during embryogenesis. The protein is Craniofacial development protein 1 (CFDP1) of Homo sapiens (Human).